The primary structure comprises 247 residues: Adenosylcobinamide-GDP ribazoletransferase (247 aa).

6 consecutive transmembrane segments (helical) span residues 34–54 (IVTF…VFVA), 59–79 (CGIP…TGGF), 113–133 (GGLA…ELAL), 138–158 (MLAA…LLMY), 171–193 (VFIG…ILAA), and 194–214 (ILMP…AIFI).

The protein belongs to the CobS family. The cofactor is Mg(2+).

Its subcellular location is the cell inner membrane. The catalysed reaction is alpha-ribazole + adenosylcob(III)inamide-GDP = adenosylcob(III)alamin + GMP + H(+). It catalyses the reaction alpha-ribazole 5'-phosphate + adenosylcob(III)inamide-GDP = adenosylcob(III)alamin 5'-phosphate + GMP + H(+). It functions in the pathway cofactor biosynthesis; adenosylcobalamin biosynthesis; adenosylcobalamin from cob(II)yrinate a,c-diamide: step 7/7. Functionally, joins adenosylcobinamide-GDP and alpha-ribazole to generate adenosylcobalamin (Ado-cobalamin). Also synthesizes adenosylcobalamin 5'-phosphate from adenosylcobinamide-GDP and alpha-ribazole 5'-phosphate. The protein is Adenosylcobinamide-GDP ribazoletransferase of Citrobacter koseri (strain ATCC BAA-895 / CDC 4225-83 / SGSC4696).